A 239-amino-acid polypeptide reads, in one-letter code: Ribonuclease PH (239 aa).

Phosphate contacts are provided by residues arginine 86 and 124 to 126 (GTR).

Belongs to the RNase PH family. As to quaternary structure, homohexameric ring arranged as a trimer of dimers.

It catalyses the reaction tRNA(n+1) + phosphate = tRNA(n) + a ribonucleoside 5'-diphosphate. In terms of biological role, phosphorolytic 3'-5' exoribonuclease that plays an important role in tRNA 3'-end maturation. Removes nucleotide residues following the 3'-CCA terminus of tRNAs; can also add nucleotides to the ends of RNA molecules by using nucleoside diphosphates as substrates, but this may not be physiologically important. Probably plays a role in initiation of 16S rRNA degradation (leading to ribosome degradation) during starvation. The sequence is that of Ribonuclease PH from Rickettsia felis (strain ATCC VR-1525 / URRWXCal2) (Rickettsia azadi).